The following is a 196-amino-acid chain: Pyridoxal 5'-phosphate synthase subunit PdxT (196 aa).

52 to 54 is a binding site for L-glutamine; it reads GES. C84 functions as the Nucleophile in the catalytic mechanism. Residues R113 and 141 to 142 contribute to the L-glutamine site; that span reads IR. Active-site charge relay system residues include H178 and E180.

It belongs to the glutaminase PdxT/SNO family. In the presence of PdxS, forms a dodecamer of heterodimers. Only shows activity in the heterodimer.

The catalysed reaction is aldehydo-D-ribose 5-phosphate + D-glyceraldehyde 3-phosphate + L-glutamine = pyridoxal 5'-phosphate + L-glutamate + phosphate + 3 H2O + H(+). The enzyme catalyses L-glutamine + H2O = L-glutamate + NH4(+). Its pathway is cofactor biosynthesis; pyridoxal 5'-phosphate biosynthesis. In terms of biological role, catalyzes the hydrolysis of glutamine to glutamate and ammonia as part of the biosynthesis of pyridoxal 5'-phosphate. The resulting ammonia molecule is channeled to the active site of PdxS. The chain is Pyridoxal 5'-phosphate synthase subunit PdxT from Pyrococcus abyssi (strain GE5 / Orsay).